Consider the following 438-residue polypeptide: MSETHLSTQRFADLPLHPEVKQALAENGFEFCTPIQALSLPVLLQSKDIAGQAQTGTGKTMAFLVATFNHLLSTPVPEGRLINQPRAIIMAPTRELAIQIAKDAILLAKHTHLKVGIVYGGESYDVQRKVLDQGVDILIGTTGRIIDYVRQGIIGLNSIQAVVLDEADRMFDLGFIKDIRFLFRRMPEANQRLNMLFSATLSMKVQELAYDHMNEPVKVEIAPEEKTSKNIKEEIFYPSQEEKMRLLLTLIEEDWPEKAIVFSNTKHSCETLWSWLEGDGHRVGLLTGDVPQKKRIRILEQFTSGQLDILVATDVAARGLHISDVSHVYNYDLPDDCEDYVHRIGRTGRAGNKGMSISFACEEYALNLPAIESYINHSIPVSNYDSEALLADIPTPAKIHRKHPSGTRNLRDRSGTSRPGAQRSGARPPRHDRTRRHS.

Positions 9 to 37 (QRFADLPLHPEVKQALAENGFEFCTPIQA) match the Q motif motif. The region spanning 40-219 (LPVLLQSKDI…YDHMNEPVKV (180 aa)) is the Helicase ATP-binding domain. Position 53-60 (53-60 (AQTGTGKT)) interacts with ATP. Residues 165 to 168 (DEAD) carry the DEAD box motif. The Helicase C-terminal domain occupies 243 to 390 (KMRLLLTLIE…VSNYDSEALL (148 aa)). The segment at 395 to 438 (TPAKIHRKHPSGTRNLRDRSGTSRPGAQRSGARPPRHDRTRRHS) is disordered. Basic residues predominate over residues 428 to 438 (PPRHDRTRRHS).

This sequence belongs to the DEAD box helicase family. RhlB subfamily. As to quaternary structure, component of the RNA degradosome, which is a multiprotein complex involved in RNA processing and mRNA degradation.

Its subcellular location is the cytoplasm. It catalyses the reaction ATP + H2O = ADP + phosphate + H(+). Its function is as follows. DEAD-box RNA helicase involved in RNA degradation. Has RNA-dependent ATPase activity and unwinds double-stranded RNA. The sequence is that of ATP-dependent RNA helicase RhlB from Shewanella baltica (strain OS223).